Here is a 183-residue protein sequence, read N- to C-terminus: Ribosome rescue factor SmrB (183 aa).

The Smr domain occupies 98 to 173 (LDLHGLTQLQ…GDAALLVLIE (76 aa)).

Belongs to the SmrB family. As to quaternary structure, associates with collided ribosomes, but not with correctly translating polysomes.

Its function is as follows. Acts as a ribosome collision sensor. Detects stalled/collided disomes (pairs of ribosomes where the leading ribosome is stalled and a second ribosome has collided with it) and endonucleolytically cleaves mRNA at the 5' boundary of the stalled ribosome. Stalled/collided disomes form a new interface (primarily via the 30S subunits) that binds SmrB. Cleaved mRNA becomes available for tmRNA ligation, leading to ribosomal subunit dissociation and rescue of stalled ribosomes. This is Ribosome rescue factor SmrB from Escherichia coli O157:H7.